Here is a 1406-residue protein sequence, read N- to C-terminus: Receptor-type tyrosine-protein phosphatase eta (1406 aa).

An N-terminal signal peptide occupies residues 1-24 (MRRLPLLPPCPLLLLLLLPAEVRC). At 25–1044 (TTACTDDCSL…LPQDPGVIAG (1020 aa)) the chain is on the extracellular side. 36 N-linked (GlcNAc...) asparagine glycosylation sites follow: asparagine 36, asparagine 52, asparagine 97, asparagine 103, asparagine 118, asparagine 124, asparagine 186, asparagine 192, asparagine 243, asparagine 275, asparagine 281, asparagine 296, asparagine 302, asparagine 331, asparagine 332, asparagine 364, asparagine 385, asparagine 391, asparagine 453, asparagine 459, asparagine 484, asparagine 500, asparagine 510, asparagine 547, asparagine 568, asparagine 630, asparagine 636, asparagine 651, asparagine 657, asparagine 719, asparagine 745, asparagine 750, asparagine 766, asparagine 776, asparagine 804, and asparagine 828. Residues 39 to 72 (EEMGTSSNDELSVNATSGNRRLSEDVSLPGRAMS) form a disordered region. Over residues 41-58 (MGTSSNDELSVNATSGNR) the composition is skewed to polar residues. 10 Fibronectin type-III domains span residues 82 to 170 (AVLD…TKPS), 171 to 259 (PVLD…TKPS), 260 to 343 (PVLD…SLNL), 346 to 437 (KPSP…TKPS), 438 to 523 (PVLD…SLYT), 524 to 614 (KPTP…TKPR), 615 to 703 (AVLH…TKPS), 704 to 793 (MVLN…VPSS), 794 to 888 (VNAF…TDPP), and 887 to 979 (PPVP…IVDV). Asparagine 1010 carries an N-linked (GlcNAc...) asparagine glycan. Residues 1045–1065 (AVIGCLLAILAVVAIGGYIFW) traverse the membrane as a helical segment. Residues 1066 to 1406 (RRRRKDKRNT…AFGKANGYHA (341 aa)) are Cytoplasmic-facing. A Tyrosine-protein phosphatase domain is found at 1110 to 1367 (FAEEYEELKS…VFLNQCVMDI (258 aa)). Substrate-binding positions include aspartate 1274, 1308-1314 (CSAGVGR), and glutamine 1352. The active-site Phosphocysteine intermediate is the cysteine 1308.

This sequence belongs to the protein-tyrosine phosphatase family. Receptor class 3 subfamily. In terms of tissue distribution, found on the apical surfaces of retinal Mueller cells, renal tubule cells and intestinal brush border cells.

The protein localises to the cell membrane. It is found in the cell projection. The protein resides in the ruffle membrane. It localises to the cell junction. It carries out the reaction O-phospho-L-tyrosyl-[protein] + H2O = L-tyrosyl-[protein] + phosphate. Its function is as follows. Tyrosine phosphatase which dephosphorylates or contributes to the dephosphorylation of several substrates. Plays a role in cell adhesion, migration, proliferation and differentiation. Has a role in megakaryocytes and platelet formation. May influence the potential of nonsensory supporting cells to either proliferate or differentiate into hair cells. This Gallus gallus (Chicken) protein is Receptor-type tyrosine-protein phosphatase eta (PTPRJ).